Here is a 97-residue protein sequence, read N- to C-terminus: MTLFASISSISNPSTSSKSSIVSFGSGTSMGSNSIACGGCGGGSGGILGSGLGFGLGLGLNLSGGFRSRGACRGNNGGSGYPGNGGMGGGNGSCCGI.

2 disordered regions span residues 1-20 and 78-97; these read MTLFASISSISNPSTSSKSS and GSGYPGNGGMGGGNGSCCGI.

The protein belongs to the hssA/B family.

The sequence is that of HssA/B-like protein 48 (hssl48) from Dictyostelium discoideum (Social amoeba).